A 97-amino-acid chain; its full sequence is Sperm protein associated with the nucleus on the X chromosome A (97 aa).

A disordered region spans residues Met-1 to Thr-49. Positions Pro-37–Ser-45 match the Nuclear localization signal motif.

The protein belongs to the SPAN-X family. Detected in testis and sperm.

The protein localises to the cytoplasm. It is found in the nucleus. In Homo sapiens (Human), this protein is Sperm protein associated with the nucleus on the X chromosome A.